The chain runs to 628 residues: DNA-directed RNA polymerase subunit gamma (628 aa).

The Zn(2+) site is built by C71, C73, C86, and C89. Mg(2+)-binding residues include D467, D469, and D471.

Belongs to the RNA polymerase beta' chain family. RpoC1 subfamily. As to quaternary structure, in cyanobacteria the RNAP catalytic core is composed of 2 alpha, 1 beta, 1 beta', 1 gamma and 1 omega subunit. When a sigma factor is associated with the core the holoenzyme is formed, which can initiate transcription. Mg(2+) is required as a cofactor. Requires Zn(2+) as cofactor.

It catalyses the reaction RNA(n) + a ribonucleoside 5'-triphosphate = RNA(n+1) + diphosphate. DNA-dependent RNA polymerase catalyzes the transcription of DNA into RNA using the four ribonucleoside triphosphates as substrates. The chain is DNA-directed RNA polymerase subunit gamma from Crocosphaera subtropica (strain ATCC 51142 / BH68) (Cyanothece sp. (strain ATCC 51142)).